Consider the following 33-residue polypeptide: Neutrophil defensin 3 (33 aa).

3 disulfides stabilise this stretch: Cys3–Cys31, Cys5–Cys20, and Cys10–Cys30.

It belongs to the alpha-defensin family.

Its subcellular location is the secreted. Its function is as follows. Anti-fungal and bactericidal activity, greater against Gram-positive bacteria. This is Neutrophil defensin 3 from Mesocricetus auratus (Golden hamster).